The sequence spans 404 residues: CCA-adding enzyme (404 aa).

2 residues coordinate ATP: glycine 32 and arginine 35. CTP contacts are provided by glycine 32 and arginine 35. Mg(2+) is bound by residues aspartate 45 and aspartate 47. 5 residues coordinate ATP: arginine 116, aspartate 159, arginine 162, arginine 165, and arginine 168. Residues arginine 116, aspartate 159, arginine 162, arginine 165, and arginine 168 each coordinate CTP.

Belongs to the tRNA nucleotidyltransferase/poly(A) polymerase family. Bacterial CCA-adding enzyme type 3 subfamily. In terms of assembly, homodimer. Mg(2+) serves as cofactor.

It catalyses the reaction a tRNA precursor + 2 CTP + ATP = a tRNA with a 3' CCA end + 3 diphosphate. The catalysed reaction is a tRNA with a 3' CCA end + 2 CTP + ATP = a tRNA with a 3' CCACCA end + 3 diphosphate. Catalyzes the addition and repair of the essential 3'-terminal CCA sequence in tRNAs without using a nucleic acid template. Adds these three nucleotides in the order of C, C, and A to the tRNA nucleotide-73, using CTP and ATP as substrates and producing inorganic pyrophosphate. tRNA 3'-terminal CCA addition is required both for tRNA processing and repair. Also involved in tRNA surveillance by mediating tandem CCA addition to generate a CCACCA at the 3' terminus of unstable tRNAs. While stable tRNAs receive only 3'-terminal CCA, unstable tRNAs are marked with CCACCA and rapidly degraded. The polypeptide is CCA-adding enzyme (Ligilactobacillus salivarius (strain UCC118) (Lactobacillus salivarius)).